The following is a 392-amino-acid chain: Cobalt-precorrin-5B C(1)-methyltransferase (392 aa).

The protein belongs to the CbiD family.

It catalyses the reaction Co-precorrin-5B + S-adenosyl-L-methionine = Co-precorrin-6A + S-adenosyl-L-homocysteine. Its pathway is cofactor biosynthesis; adenosylcobalamin biosynthesis; cob(II)yrinate a,c-diamide from sirohydrochlorin (anaerobic route): step 6/10. In terms of biological role, catalyzes the methylation of C-1 in cobalt-precorrin-5B to form cobalt-precorrin-6A. This Pelobacter propionicus (strain DSM 2379 / NBRC 103807 / OttBd1) protein is Cobalt-precorrin-5B C(1)-methyltransferase.